The chain runs to 220 residues: Chloramphenicol acetyltransferase (220 aa).

Residue histidine 187 is the Proton acceptor of the active site.

This sequence belongs to the chloramphenicol acetyltransferase family. As to quaternary structure, homotrimer.

The catalysed reaction is chloramphenicol + acetyl-CoA = chloramphenicol 3-acetate + CoA. Functionally, this enzyme is an effector of chloramphenicol resistance in bacteria. The chain is Chloramphenicol acetyltransferase (cat86) from Bacillus pumilus (Bacillus mesentericus).